Here is a 490-residue protein sequence, read N- to C-terminus: Phosphoglucosamine mutase (490 aa).

The Phosphoserine intermediate role is filled by Ser139. Ser139, Asp279, Asp281, and Asp283 together coordinate Mg(2+). Position 139 is a phosphoserine (Ser139).

The protein belongs to the phosphohexose mutase family. The cofactor is Mg(2+). Activated by phosphorylation.

The catalysed reaction is alpha-D-glucosamine 1-phosphate = D-glucosamine 6-phosphate. In terms of biological role, catalyzes the conversion of glucosamine-6-phosphate to glucosamine-1-phosphate. This chain is Phosphoglucosamine mutase, found in Nostoc sp. (strain PCC 7120 / SAG 25.82 / UTEX 2576).